Consider the following 221-residue polypeptide: uncharacterized protein (221 aa).

5 helical membrane-spanning segments follow: residues 2–22 (FIAK…FFFV), 34–54 (LLTL…LAQA), 97–117 (AYGL…SNVI), 131–151 (ALDQ…FMGI), and 177–197 (ILWP…LQVI).

Belongs to the peroxisomal membrane protein PXMP2/4 family.

It localises to the membrane. This is an uncharacterized protein from Schizosaccharomyces pombe (strain 972 / ATCC 24843) (Fission yeast).